Reading from the N-terminus, the 210-residue chain is NADH dehydrogenase [ubiquinone] iron-sulfur protein 8, mitochondrial (210 aa).

A mitochondrion-targeting transit peptide spans 1–34 (MRCLTTPMLLRALAQAARAGPPCGRSLHSSAVAA). 2 4Fe-4S ferredoxin-type domains span residues 102-131 (RRYPSGEERCIACKLCEAICPAQAITIEAE) and 141-170 (TRYDIDMTKCIYCGFCQEACPVDAIVEGPN). The [4Fe-4S] cluster site is built by Cys111, Cys114, Cys117, Cys121, Cys150, Cys153, Cys156, and Cys160.

Belongs to the complex I 23 kDa subunit family. As to quaternary structure, core subunit of respiratory chain NADH dehydrogenase (Complex I) which is composed of 45 different subunits. This is a component of the iron-sulfur (IP) fragment of the enzyme. Interacts with RAB5IF. Requires [4Fe-4S] cluster as cofactor.

Its subcellular location is the mitochondrion inner membrane. It carries out the reaction a ubiquinone + NADH + 5 H(+)(in) = a ubiquinol + NAD(+) + 4 H(+)(out). Functionally, core subunit of the mitochondrial membrane respiratory chain NADH dehydrogenase (Complex I) which catalyzes electron transfer from NADH through the respiratory chain, using ubiquinone as an electron acceptor. Essential for the catalytic activity and assembly of complex I. The sequence is that of NADH dehydrogenase [ubiquinone] iron-sulfur protein 8, mitochondrial (NDUFS8) from Pongo abelii (Sumatran orangutan).